The primary structure comprises 142 residues: Large ribosomal subunit protein bL21 (142 aa).

Positions 74 to 84 are enriched in basic residues; it reads RRRQNSKRTRG. Residues 74-142 are disordered; it reads RRRQNSKRTR…KAAAKAESAE (69 aa). Positions 107 to 125 are enriched in basic and acidic residues; that stretch reads KAAEKKAPKADAAEGEAAK. Positions 126-135 are enriched in basic residues; it reads PKKAAPKKAA.

This sequence belongs to the bacterial ribosomal protein bL21 family. As to quaternary structure, part of the 50S ribosomal subunit. Contacts protein L20.

In terms of biological role, this protein binds to 23S rRNA in the presence of protein L20. In Brucella melitensis biotype 2 (strain ATCC 23457), this protein is Large ribosomal subunit protein bL21.